The sequence spans 429 residues: Serine/threonine-protein kinase BGLF4 (429 aa).

The interval 1–27 (MDVNMAAELSPTNSSSSGELSVSPEPP) is disordered. Residues 1–409 (MDVNMAAELS…CRPRFEHPHL (409 aa)) form the Protein kinase domain. A compositionally biased stretch (low complexity) spans 14–23 (SSSSGELSVS). The SUMO interaction motif stretch occupies residues 36–40 (KVTVI). Residues 110–118 (LYHELMVCD) and E128 contribute to the ATP site. D195 acts as the Proton acceptor in catalysis. The segment at 344 to 350 (VVLLEVL) is SUMO interaction motif.

It belongs to the protein kinase superfamily. Ser/Thr protein kinase family. As to quaternary structure, interacts with host NUP62 and NUP153; this interaction plays a role in nuclear targeting of BGLF4. Interacts with host SUMO1 and SUMO2.

The protein resides in the virion tegument. The protein localises to the host nucleus. It carries out the reaction L-seryl-[protein] + ATP = O-phospho-L-seryl-[protein] + ADP + H(+). The enzyme catalyses L-threonyl-[protein] + ATP = O-phospho-L-threonyl-[protein] + ADP + H(+). In terms of biological role, plays many key roles by phosphorylating several proteins including the viral DNA processivity factor BMRF1, EBNA1 or EBNA2. Modifies the host nuclear envelope structure and induces the redistribution of nuclear envelope-associated proteins by phosphorylating host nucleoporins. Subsequently, promotes the nuclear transport of EBV lytic proteins. Required for efficient lytic DNA replication and release of nucleocapsids from the nucleus. Contributes to the compaction of host cell chromatin in cells undergoing lytic replication, presumably by phosphorylating the host condensin complex and host TOP2A. Induces disassembly of the nuclear lamina by phosphorylating with host LMNA. Phosphorylates substrates involved in capsid assembly and DNA packaging. Facilitates the switch from latent to lytic DNA replication by down-regulating EBNA1 replication function. Phosphorylates the viral immediate-early protein BZLF1 and inhibits its sumoylation by interacting with host SUMO1 and SUMO2. Phosphorylates also host SAMHD1 and thereby counteracts its antiviral effect by reducing its dNTP hydrolase activity. The sequence is that of Serine/threonine-protein kinase BGLF4 from Epstein-Barr virus (strain AG876) (HHV-4).